Here is a 217-residue protein sequence, read N- to C-terminus: Ras-related protein Rab-19 (217 aa).

GTP-binding residues include S26, V28, G29, K30, T31, C32, Y42, S43, E44, S45, and T49. Residue T31 coordinates Mg(2+). A Switch 1 motif is present at residues 39–54 (SGVYSESQQNTIGVDF). Positions 49 and 72 each coordinate Mg(2+). Residues 74-89 (AGQERFRTITQSYYRS) carry the Switch 2 motif. GTP contacts are provided by G75, N130, K131, D133, S161, A162, and K163. Residues C215 and C217 are each lipidated (S-geranylgeranyl cysteine). Position 217 is a cysteine methyl ester (C217).

This sequence belongs to the small GTPase superfamily. Rab family. Requires Mg(2+) as cofactor. In terms of tissue distribution, expressed in a tissue-specific manner. Detected at high levels in intestine, lung and spleen, and at a lower level in kidney.

It localises to the cell membrane. The catalysed reaction is GTP + H2O = GDP + phosphate + H(+). Regulated by guanine nucleotide exchange factors (GEFs) which promote the exchange of bound GDP for free GTP. Regulated by GTPase activating proteins (GAPs) which increase the GTP hydrolysis activity. Inhibited by GDP dissociation inhibitors (GDIs). Its function is as follows. The small GTPases Rab are key regulators of intracellular membrane trafficking, from the formation of transport vesicles to their fusion with membranes. Rabs cycle between an inactive GDP-bound form and an active GTP-bound form that is able to recruit to membranes different set of downstream effectors directly responsible for vesicle formation, movement, tethering and fusion. This Mus musculus (Mouse) protein is Ras-related protein Rab-19.